Here is a 317-residue protein sequence, read N- to C-terminus: Glutathione synthetase (317 aa).

An ATP-grasp domain is found at 126 to 311; sequence KFFATQFTQC…IGDKLMDAIA (186 aa). 152-208 lines the ATP pocket; that stretch reads AAEHRDIILKPLDGMGGSSIFRHREGDPNLSVILETLTQHGSQQIMAQRYLPEIKDG. Mg(2+) contacts are provided by E282 and N284.

Belongs to the prokaryotic GSH synthase family. Mg(2+) is required as a cofactor. The cofactor is Mn(2+).

The catalysed reaction is gamma-L-glutamyl-L-cysteine + glycine + ATP = glutathione + ADP + phosphate + H(+). It functions in the pathway sulfur metabolism; glutathione biosynthesis; glutathione from L-cysteine and L-glutamate: step 2/2. In Pseudomonas aeruginosa (strain ATCC 15692 / DSM 22644 / CIP 104116 / JCM 14847 / LMG 12228 / 1C / PRS 101 / PAO1), this protein is Glutathione synthetase.